The chain runs to 543 residues: Germacrene A synthase (543 aa).

Positions 296, 300, 439, and 447 each coordinate Mg(2+). The DDXXD motif signature appears at 296 to 300 (DDTYD).

It belongs to the terpene synthase family. Tpsa subfamily. Mg(2+) is required as a cofactor. It depends on Mn(2+) as a cofactor. Barely detectable in leaves.

It localises to the plastid. Its subcellular location is the chloroplast. The catalysed reaction is (2E,6E)-farnesyl diphosphate = germacrene A + diphosphate. The enzyme catalyses (2E,6E)-farnesyl diphosphate = (1S,2S,4R)-beta-elemene + diphosphate. The protein operates within secondary metabolite biosynthesis; terpenoid biosynthesis. Functionally, sesquiterpene synthase involved in the biosynthesis of volatile compounds widely used in aromatherapy and folk medicine, and present in culinary herbs. Mediates the conversion of (2E,6E)-farnesyl diphosphate (FPP) into germacrene A and beta-elemene. Not able to use (2E)-geranyl diphosphate (GPP) as substrate. The polypeptide is Germacrene A synthase (Lavandula viridis (Green lavender)).